The primary structure comprises 245 residues: tRNA pseudouridine synthase A (245 aa).

D52 (nucleophile) is an active-site residue. Y111 lines the substrate pocket.

It belongs to the tRNA pseudouridine synthase TruA family. As to quaternary structure, homodimer.

The enzyme catalyses uridine(38/39/40) in tRNA = pseudouridine(38/39/40) in tRNA. In terms of biological role, formation of pseudouridine at positions 38, 39 and 40 in the anticodon stem and loop of transfer RNAs. This is tRNA pseudouridine synthase A from Bradyrhizobium sp. (strain BTAi1 / ATCC BAA-1182).